A 299-amino-acid polypeptide reads, in one-letter code: uncharacterized protein (299 aa).

The next 8 helical transmembrane spans lie at 13-33 (ILFL…LHFM), 36-56 (AFVI…FLML), 79-99 (SFGI…VIII), 112-132 (TAIG…ISVI), 151-171 (ITSE…LFFI), 201-221 (FLIL…VILV), 241-261 (YVIL…MLLS), and 267-287 (PPGP…FLII).

This sequence belongs to the ABC-3 integral membrane protein family.

The protein resides in the plastid. Its subcellular location is the cyanelle membrane. This is an uncharacterized protein from Cyanophora paradoxa.